A 146-amino-acid polypeptide reads, in one-letter code: Large ribosomal subunit protein uL15 (146 aa).

The segment covering 1–10 (MTLKLHDLRP) has biased composition (basic and acidic residues). Residues 1–41 (MTLKLHDLRPARGSKIARTRVGRGDGSKGKTAGRGTKGTRA) are disordered.

This sequence belongs to the universal ribosomal protein uL15 family. As to quaternary structure, part of the 50S ribosomal subunit.

Functionally, binds to the 23S rRNA. This Mycobacterium tuberculosis (strain ATCC 25177 / H37Ra) protein is Large ribosomal subunit protein uL15.